A 136-amino-acid chain; its full sequence is Purkinje cell protein 2 homolog (136 aa).

2 disordered regions span residues 1-64 (MMDQ…PEMD) and 86-136 (SSLP…TQAP). Residues 23-45 (QEGFFNLLSHVQGDRMEGQRCSL) enclose the GoLoco 1 domain. Positions 49–59 (PGQTTKSQSDP) are enriched in polar residues. One can recognise a GoLoco 2 domain in the interval 63–85 (MDSLMDMLASTQGRRMDDQRVTV). A compositionally biased stretch (polar residues) spans 107-117 (LSPQPLLTPQD). Position 127 is a phosphoserine (Ser127).

Functionally, may function as a cell-type specific modulator for G protein-mediated cell signaling. The protein is Purkinje cell protein 2 homolog (PCP2) of Homo sapiens (Human).